Reading from the N-terminus, the 95-residue chain is Beta-defensin 132 (95 aa).

Positions 1–22 (MKFLLLVLAALGFLTQVIPASA) are cleaved as a signal peptide. 3 disulfides stabilise this stretch: cysteine 27–cysteine 55, cysteine 35–cysteine 49, and cysteine 39–cysteine 56. The segment at 74–95 (HWQSRRRNTQRKDKKQQTTVTS) is disordered. The span at 76–87 (QSRRRNTQRKDK) shows a compositional bias: basic residues.

The protein belongs to the beta-defensin family.

It is found in the secreted. Has antibacterial activity. This chain is Beta-defensin 132 (DEFB132), found in Homo sapiens (Human).